The chain runs to 202 residues: Adenylyl-sulfate kinase (202 aa).

ATP is bound at residue 31–38 (GLSASGKS). The Phosphoserine intermediate role is filled by S105.

This sequence belongs to the APS kinase family.

It catalyses the reaction adenosine 5'-phosphosulfate + ATP = 3'-phosphoadenylyl sulfate + ADP + H(+). The protein operates within sulfur metabolism; hydrogen sulfide biosynthesis; sulfite from sulfate: step 2/3. Catalyzes the synthesis of activated sulfate. This Saccharomyces bayanus (Yeast) protein is Adenylyl-sulfate kinase (MET14).